We begin with the raw amino-acid sequence, 398 residues long: 1-deoxy-D-xylulose 5-phosphate reductoisomerase (398 aa).

T10, G11, S12, I13, G36, R37, N38, and N124 together coordinate NADPH. K125 serves as a coordination point for 1-deoxy-D-xylulose 5-phosphate. NADPH is bound at residue E126. D150 lines the Mn(2+) pocket. Positions 151, 152, 186, and 209 each coordinate 1-deoxy-D-xylulose 5-phosphate. E152 provides a ligand contact to Mn(2+). Residue G215 participates in NADPH binding. 1-deoxy-D-xylulose 5-phosphate contacts are provided by S222, N227, K228, and E231. E231 contributes to the Mn(2+) binding site.

This sequence belongs to the DXR family. In terms of assembly, homodimer. Mg(2+) is required as a cofactor. The cofactor is Mn(2+).

It carries out the reaction 2-C-methyl-D-erythritol 4-phosphate + NADP(+) = 1-deoxy-D-xylulose 5-phosphate + NADPH + H(+). It participates in isoprenoid biosynthesis; isopentenyl diphosphate biosynthesis via DXP pathway; isopentenyl diphosphate from 1-deoxy-D-xylulose 5-phosphate: step 1/6. Its function is as follows. Catalyzes the NADPH-dependent rearrangement and reduction of 1-deoxy-D-xylulose-5-phosphate (DXP) to 2-C-methyl-D-erythritol 4-phosphate (MEP). This Yersinia enterocolitica serotype O:8 / biotype 1B (strain NCTC 13174 / 8081) protein is 1-deoxy-D-xylulose 5-phosphate reductoisomerase.